Here is a 65-residue protein sequence, read N- to C-terminus: Large ribosomal subunit protein bL35 (65 aa).

This sequence belongs to the bacterial ribosomal protein bL35 family.

This chain is Large ribosomal subunit protein bL35, found in Aeromonas hydrophila subsp. hydrophila (strain ATCC 7966 / DSM 30187 / BCRC 13018 / CCUG 14551 / JCM 1027 / KCTC 2358 / NCIMB 9240 / NCTC 8049).